We begin with the raw amino-acid sequence, 165 residues long: MVDDSTRKTLSNIPLLQIRAGPREKDVWVQRLKEEYQALIKYVENNKQSGSDWFRLESNKEGTKWFGKCWYMHNLLKYEFDVEFDIPVTYPTTAPEIALPELDGKTAKMYRGGKICLTDHFKPLWARNVPKFGIAHAMALGLAPWLAVEVPDLIEKGIITYKDNC.

Cys-116 serves as the catalytic Glycyl thioester intermediate.

The protein belongs to the ubiquitin-conjugating enzyme family. UFC1 subfamily.

E2-like enzyme which forms an intermediate with UFM1 via a thioester linkage. In Drosophila mojavensis (Fruit fly), this protein is Ubiquitin-fold modifier-conjugating enzyme 1.